A 308-amino-acid polypeptide reads, in one-letter code: Probable 5-dehydro-4-deoxyglucarate dehydratase (308 aa).

The protein belongs to the DapA family.

It carries out the reaction 5-dehydro-4-deoxy-D-glucarate + H(+) = 2,5-dioxopentanoate + CO2 + H2O. The protein operates within carbohydrate acid metabolism; D-glucarate degradation; 2,5-dioxopentanoate from D-glucarate: step 2/2. The polypeptide is Probable 5-dehydro-4-deoxyglucarate dehydratase (Bacillus licheniformis (strain ATCC 14580 / DSM 13 / JCM 2505 / CCUG 7422 / NBRC 12200 / NCIMB 9375 / NCTC 10341 / NRRL NRS-1264 / Gibson 46)).